Here is a 480-residue protein sequence, read N- to C-terminus: Probable E3 ubiquitin protein ligase DRIPH (480 aa).

The segment at 16 to 57 (CPICTNPFKDATTISECLHTFCRSCIRNKFINERVNACPVCN) adopts an RING-type zinc-finger fold. Disordered stretches follow at residues 93–133 (GPKT…EPAN), 167–193 (RGRK…PKIK), 241–261 (TPPD…ESVE), and 280–356 (VNQN…EMKV). Residues 103–112 (SSKKKRKSRT) show a composition bias toward basic residues. Positions 113–133 (SLRVSSSRVSSSPDTPLEPAN) are enriched in low complexity. A compositionally biased stretch (basic and acidic residues) spans 175 to 193 (KKIDSKPEPELPPKEPKIK). The segment covering 246–260 (VEPEISSDDDTEESV) has biased composition (acidic residues). A compositionally biased stretch (polar residues) spans 298–309 (GQKLKTNGAATS).

The enzyme catalyses S-ubiquitinyl-[E2 ubiquitin-conjugating enzyme]-L-cysteine + [acceptor protein]-L-lysine = [E2 ubiquitin-conjugating enzyme]-L-cysteine + N(6)-ubiquitinyl-[acceptor protein]-L-lysine.. It participates in protein modification; protein ubiquitination. The protein is Probable E3 ubiquitin protein ligase DRIPH of Arabidopsis thaliana (Mouse-ear cress).